Reading from the N-terminus, the 110-residue chain is Iron-sulfur cluster assembly protein CyaY (110 aa).

This sequence belongs to the frataxin family.

Its function is as follows. Involved in iron-sulfur (Fe-S) cluster assembly. May act as a regulator of Fe-S biogenesis. This is Iron-sulfur cluster assembly protein CyaY from Stutzerimonas stutzeri (strain A1501) (Pseudomonas stutzeri).